The primary structure comprises 161 residues: Troponin C, slow skeletal and cardiac muscles (161 aa).

At Met1 the chain carries N-acetylmethionine. EF-hand domains lie at 16–51 (QKNEFKAAFDIFVLGAEDGCISTKELGKVMRMLGQN), 52–87 (PTPEELQEMIDEVDEDGSGTVDFDEFLVMMVRCMKD), 92–127 (KSEEELSDLFRMFDKNADGYIDLDELKMMLQATGET), and 128–161 (ITEDDIEELMKDGDKNNDGRIDYDEFLEFMKGVE). Ca(2+) contacts are provided by Asp65, Asp67, Ser69, Thr71, and Glu76. A Phosphoserine modification is found at Ser98. Asp105, Asn107, Asp109, Tyr111, Glu116, Asp141, Asn143, Asp145, Arg147, and Glu152 together coordinate Ca(2+).

This sequence belongs to the troponin C family.

In terms of biological role, troponin is the central regulatory protein of striated muscle contraction. Tn consists of three components: Tn-I which is the inhibitor of actomyosin ATPase, Tn-T which contains the binding site for tropomyosin and Tn-C. The binding of calcium to Tn-C abolishes the inhibitory action of Tn on actin filaments. This chain is Troponin C, slow skeletal and cardiac muscles (Tnnc1), found in Mus musculus (Mouse).